A 224-amino-acid polypeptide reads, in one-letter code: Large ribosomal subunit protein uL3 (224 aa).

Glutamine 159 bears the N5-methylglutamine mark.

The protein belongs to the universal ribosomal protein uL3 family. Part of the 50S ribosomal subunit. Forms a cluster with proteins L14 and L19. Post-translationally, methylated by PrmB.

Functionally, one of the primary rRNA binding proteins, it binds directly near the 3'-end of the 23S rRNA, where it nucleates assembly of the 50S subunit. This is Large ribosomal subunit protein uL3 from Janthinobacterium sp. (strain Marseille) (Minibacterium massiliensis).